We begin with the raw amino-acid sequence, 387 residues long: Chaperone protein DnaJ (387 aa).

In terms of domain architecture, J spans 6–70 (DYYEILGLSR…EKRAQYDRFG (65 aa)). Residues 130–212 (GVRKDIDVPR…CSGTGRVRNT (83 aa)) form a CR-type zinc finger. Zn(2+)-binding residues include Cys-143, Cys-146, Cys-160, Cys-163, Cys-186, Cys-189, Cys-200, and Cys-203. 4 CXXCXGXG motif repeats span residues 143–150 (CSNCSGTG), 160–167 (CPTCGGTG), 186–193 (CSTCRGKG), and 200–207 (CPVCSGTG). The segment at 143–162 (CSNCSGTGARPGTSPKRCPT) is disordered.

It belongs to the DnaJ family. Homodimer. Requires Zn(2+) as cofactor.

The protein resides in the cytoplasm. Its function is as follows. Participates actively in the response to hyperosmotic and heat shock by preventing the aggregation of stress-denatured proteins and by disaggregating proteins, also in an autonomous, DnaK-independent fashion. Unfolded proteins bind initially to DnaJ; upon interaction with the DnaJ-bound protein, DnaK hydrolyzes its bound ATP, resulting in the formation of a stable complex. GrpE releases ADP from DnaK; ATP binding to DnaK triggers the release of the substrate protein, thus completing the reaction cycle. Several rounds of ATP-dependent interactions between DnaJ, DnaK and GrpE are required for fully efficient folding. Also involved, together with DnaK and GrpE, in the DNA replication of plasmids through activation of initiation proteins. This Methanosarcina thermophila protein is Chaperone protein DnaJ.